We begin with the raw amino-acid sequence, 294 residues long: RNA exonuclease 4 (294 aa).

Residues 1–13 (MVLSSNWLSLQKS) are compositionally biased toward polar residues. The disordered stretch occupies residues 1–56 (MVLSSNWLSLQKSTDSDSVNKNKGGKKTKSNSKKRTVSVKKDKQYVDKKKKNGTGS). Over residues 23–38 (KGGKKTKSNSKKRTVS) the composition is skewed to basic residues. Residues 119–271 (YVSMDCEFVG…EDARATMLLY (153 aa)) enclose the Exonuclease domain.

This sequence belongs to the REXO4 family.

The protein localises to the nucleus. Exoribonuclease involved in ribosome biosynthesis. Involved in the processing of ITS1, the internal transcribed spacer localized between the 18S and 5.8S rRNAs. This chain is RNA exonuclease 4 (REX4), found in Kluyveromyces lactis (strain ATCC 8585 / CBS 2359 / DSM 70799 / NBRC 1267 / NRRL Y-1140 / WM37) (Yeast).